Reading from the N-terminus, the 182-residue chain is MKETRVAYRYAKSLIDLAAENGVLDRVNADMAGIESVFKQNHQLVAVMKNPIVQGDKKHAILEALFGGKVDNFTMSLLSLLTKKHREAVVFEISSEFQRQYREKMGIKIVEVTTTQPITEDQRANFKAIMASKASKVELIEKIDEKILGGFVLKMDDQQIDESVIAKLNKIKNKFTEQVINY.

It belongs to the ATPase delta chain family. As to quaternary structure, F-type ATPases have 2 components, F(1) - the catalytic core - and F(0) - the membrane proton channel. F(1) has five subunits: alpha(3), beta(3), gamma(1), delta(1), epsilon(1). F(0) has three main subunits: a(1), b(2) and c(10-14). The alpha and beta chains form an alternating ring which encloses part of the gamma chain. F(1) is attached to F(0) by a central stalk formed by the gamma and epsilon chains, while a peripheral stalk is formed by the delta and b chains.

It is found in the cell inner membrane. In terms of biological role, f(1)F(0) ATP synthase produces ATP from ADP in the presence of a proton or sodium gradient. F-type ATPases consist of two structural domains, F(1) containing the extramembraneous catalytic core and F(0) containing the membrane proton channel, linked together by a central stalk and a peripheral stalk. During catalysis, ATP synthesis in the catalytic domain of F(1) is coupled via a rotary mechanism of the central stalk subunits to proton translocation. Functionally, this protein is part of the stalk that links CF(0) to CF(1). It either transmits conformational changes from CF(0) to CF(1) or is implicated in proton conduction. This chain is ATP synthase subunit delta, found in Cytophaga hutchinsonii (strain ATCC 33406 / DSM 1761 / CIP 103989 / NBRC 15051 / NCIMB 9469 / D465).